Consider the following 363-residue polypeptide: MKTVINIFILFTFLASLSANAQRIKDLADVAGVRSNQLIGYGLVVGLPGTGEQSPFTEQSFKTMLSNFGITMPDKLKPKIKNVAAVAVHAELSAFTKPGQTIDVTVSSMGSAQSLRGGTLIQTILMGIDGNAYAVAQGSLIVSGLGAQGLDGSQVLVNIPTVGRIANGGIVEREVKSPFSSGDHITFNLRHSDFTTAKLLSDTINDLIEGSAKALDATSVRVRAPRDISDRVSFLSVLENLEFEPASPAAKIIVNSRTGTIVIGSEVTLLAAAITHGGITVTINEIQDVSQPNAFAEGETVVTNQSDINVSNSDARMFVFKPGVTLETLVRAINEVGAGPGDVMAILEALDQAGAIRGELVII.

Residues 1 to 21 form the signal peptide; sequence MKTVINIFILFTFLASLSANA.

Belongs to the FlgI family. The basal body constitutes a major portion of the flagellar organelle and consists of four rings (L,P,S, and M) mounted on a central rod.

The protein localises to the periplasm. It localises to the bacterial flagellum basal body. In terms of biological role, assembles around the rod to form the L-ring and probably protects the motor/basal body from shearing forces during rotation. This Colwellia psychrerythraea (strain 34H / ATCC BAA-681) (Vibrio psychroerythus) protein is Flagellar P-ring protein.